The primary structure comprises 261 residues: Methionine aminopeptidase (261 aa).

His-78 is a substrate binding site. A divalent metal cation is bound by residues Asp-96, Asp-107, and His-170. Position 177 (His-177) interacts with substrate. Glu-202 and Glu-233 together coordinate a divalent metal cation.

The protein belongs to the peptidase M24A family. Methionine aminopeptidase type 1 subfamily. Monomer. Co(2+) serves as cofactor. The cofactor is Zn(2+). Requires Mn(2+) as cofactor. It depends on Fe(2+) as a cofactor.

The catalysed reaction is Release of N-terminal amino acids, preferentially methionine, from peptides and arylamides.. Functionally, removes the N-terminal methionine from nascent proteins. The N-terminal methionine is often cleaved when the second residue in the primary sequence is small and uncharged (Met-Ala-, Cys, Gly, Pro, Ser, Thr, or Val). Requires deformylation of the N(alpha)-formylated initiator methionine before it can be hydrolyzed. The sequence is that of Methionine aminopeptidase from Buchnera aphidicola subsp. Schizaphis graminum (strain Sg).